A 207-amino-acid chain; its full sequence is Large ribosomal subunit protein uL4 (207 aa).

A disordered region spans residues 56–76 (EVRGGGRKPWRQKGTGRARAG). Basic residues predominate over residues 60-71 (GGRKPWRQKGTG).

It belongs to the universal ribosomal protein uL4 family. Part of the 50S ribosomal subunit.

One of the primary rRNA binding proteins, this protein initially binds near the 5'-end of the 23S rRNA. It is important during the early stages of 50S assembly. It makes multiple contacts with different domains of the 23S rRNA in the assembled 50S subunit and ribosome. In terms of biological role, forms part of the polypeptide exit tunnel. The protein is Large ribosomal subunit protein uL4 of Desulfitobacterium hafniense (strain Y51).